The chain runs to 240 residues: Probable transcriptional regulatory protein VFMJ11_A0186 (240 aa).

It belongs to the TACO1 family.

It localises to the cytoplasm. This Aliivibrio fischeri (strain MJ11) (Vibrio fischeri) protein is Probable transcriptional regulatory protein VFMJ11_A0186.